Consider the following 182-residue polypeptide: Adenine phosphoribosyltransferase (182 aa).

This sequence belongs to the purine/pyrimidine phosphoribosyltransferase family. In terms of assembly, homodimer.

It is found in the cytoplasm. It carries out the reaction AMP + diphosphate = 5-phospho-alpha-D-ribose 1-diphosphate + adenine. The protein operates within purine metabolism; AMP biosynthesis via salvage pathway; AMP from adenine: step 1/1. In terms of biological role, catalyzes a salvage reaction resulting in the formation of AMP, that is energically less costly than de novo synthesis. This chain is Adenine phosphoribosyltransferase, found in Ectopseudomonas mendocina (strain ymp) (Pseudomonas mendocina).